Reading from the N-terminus, the 154-residue chain is Cyclin-dependent protein kinase inhibitor SMR14 (154 aa).

A disordered region spans residues 1-111; that stretch reads MSKIKIFHLF…RPPRKPKAIP (111 aa). Over residues 24-37 the composition is skewed to low complexity; that stretch reads SLLVPSKSDSLDSS. Residues 74–83 are compositionally biased toward basic and acidic residues; sequence KWECKDEESP.

In terms of biological role, probable cyclin-dependent protein kinase (CDK) inhibitor that functions as a repressor of mitosis in the endoreduplication cell cycle. This is Cyclin-dependent protein kinase inhibitor SMR14 from Arabidopsis thaliana (Mouse-ear cress).